A 338-amino-acid chain; its full sequence is Phospho-2-dehydro-3-deoxyheptonate aldolase (338 aa).

The protein belongs to the class-I DAHP synthase family. In terms of assembly, homotetramer. It depends on a divalent metal cation as a cofactor.

The catalysed reaction is D-erythrose 4-phosphate + phosphoenolpyruvate + H2O = 7-phospho-2-dehydro-3-deoxy-D-arabino-heptonate + phosphate. The protein operates within metabolic intermediate biosynthesis; chorismate biosynthesis; chorismate from D-erythrose 4-phosphate and phosphoenolpyruvate: step 1/7. With respect to regulation, inhibited by L-phenylalanine and L-tyrosine. In terms of biological role, catalyzes the condensation of phosphoenolpyruvate (PEP) and D-erythrose-4-phosphate (E4P) giving rise to 3-deoxy-D-arabino-heptulosonate-7-phosphate (DAHP). The protein is Phospho-2-dehydro-3-deoxyheptonate aldolase (aroF) of Thermotoga maritima (strain ATCC 43589 / DSM 3109 / JCM 10099 / NBRC 100826 / MSB8).